The chain runs to 495 residues: Probable cytosol aminopeptidase (495 aa).

Mn(2+) is bound by residues lysine 266 and aspartate 271. Residue lysine 278 is part of the active site. Mn(2+)-binding residues include aspartate 289, aspartate 348, and glutamate 350. Residue arginine 352 is part of the active site.

This sequence belongs to the peptidase M17 family. Mn(2+) is required as a cofactor.

Its subcellular location is the cytoplasm. It carries out the reaction Release of an N-terminal amino acid, Xaa-|-Yaa-, in which Xaa is preferably Leu, but may be other amino acids including Pro although not Arg or Lys, and Yaa may be Pro. Amino acid amides and methyl esters are also readily hydrolyzed, but rates on arylamides are exceedingly low.. The enzyme catalyses Release of an N-terminal amino acid, preferentially leucine, but not glutamic or aspartic acids.. Its function is as follows. Presumably involved in the processing and regular turnover of intracellular proteins. Catalyzes the removal of unsubstituted N-terminal amino acids from various peptides. This chain is Probable cytosol aminopeptidase, found in Pseudomonas paraeruginosa (strain DSM 24068 / PA7) (Pseudomonas aeruginosa (strain PA7)).